We begin with the raw amino-acid sequence, 84 residues long: Beta-defensin 119 (84 aa).

The signal sequence occupies residues 1–21 (MKLLYLFLAILLAIEEPVISG). Disulfide bonds link Cys28–Cys55, Cys35–Cys49, and Cys39–Cys56.

The protein belongs to the beta-defensin family. As to expression, abundant expression in the male reproductive tract only. Abundant expressed in testis and the caput region of epididymis, but low in the corpus region.

Its subcellular location is the secreted. Has antibacterial activity. This Homo sapiens (Human) protein is Beta-defensin 119 (DEFB119).